Here is a 244-residue protein sequence, read N- to C-terminus: tRNA1(Val) (adenine(37)-N6)-methyltransferase (244 aa).

The protein belongs to the methyltransferase superfamily. tRNA (adenine-N(6)-)-methyltransferase family.

Its subcellular location is the cytoplasm. The enzyme catalyses adenosine(37) in tRNA1(Val) + S-adenosyl-L-methionine = N(6)-methyladenosine(37) in tRNA1(Val) + S-adenosyl-L-homocysteine + H(+). Functionally, specifically methylates the adenine in position 37 of tRNA(1)(Val) (anticodon cmo5UAC). The protein is tRNA1(Val) (adenine(37)-N6)-methyltransferase of Photorhabdus laumondii subsp. laumondii (strain DSM 15139 / CIP 105565 / TT01) (Photorhabdus luminescens subsp. laumondii).